The following is a 50-amino-acid chain: Ampulexin 2 (50 aa).

The N-terminal stretch at 1-26 is a signal peptide; it reads MKAIMVLFYVMTLTIIGSFSMVSGSP.

Dimer; disulfide-linked. As to expression, expressed in venom sac and, to a lesser extent, in venom gland. Not expressed in brain.

Its subcellular location is the secreted. Functionally, amphipathic peptide which probably adopts an alpha-helical structure. Has no antimicrobial activity against E.coli DH5alpha or B.thuringiensis. Is not cytotoxic in vitro. The sequence is that of Ampulexin 2 from Ampulex compressa (Emerald cockroach wasp).